The chain runs to 703 residues: FERM domain-containing protein 7 (703 aa).

An FERM domain is found at 2-282 (LHLKVQFLDD…EYHAFFRLSE (281 aa)). Residues 525 to 552 (RNMRIKSLQQDLQELQEAMARTSGRSNI) are a coiled coil.

As to expression, in the developing cerebral cortex, strong expression is observed in the ventricular and intermediate zones at 13 and 17 dpc. At 17 dpc and P0, expression appears to be restricted to the cortical plate. In neonates, highly expressed in cortex, hippocampus, cerebellum, olfactory bulb and eye with little or no expression in liver, kidney, skeletal muscle or heart muscle (at protein level).

The protein resides in the cell projection. It is found in the neuron projection. It localises to the growth cone. Functionally, plays a role in neurite development, may be through the activation of the GTPase RAC1. Plays a role in the control of eye movement and gaze stability. The polypeptide is FERM domain-containing protein 7 (Mus musculus (Mouse)).